We begin with the raw amino-acid sequence, 335 residues long: Syntaxin-18 (335 aa).

The Cytoplasmic portion of the chain corresponds to 1–309 (MAVDITLLFR…EDIREAIKNN (309 aa)). The span at 168 to 208 (KLEPEPNTKTRESTSSEKVSRSPSKDSEENPATEERPEKIL) shows a compositional bias: basic and acidic residues. A disordered region spans residues 168–226 (KLEPEPNTKTRESTSSEKVSRSPSKDSEENPATEERPEKILAETQPELGTWGDGKGEDE). A t-SNARE coiled-coil homology domain is found at 243-305 (IGEMNSLFDE…KEGNEDIREA (63 aa)). The chain crosses the membrane as a helical; Anchor for type IV membrane protein span at residues 310–330 (AGFRVWILFFLVMCSFSLLFL). At 331 to 335 (DWYDS) the chain is on the vesicular side.

Belongs to the syntaxin family. As to quaternary structure, component of a SNARE complex consisting of STX18, USE1L, BNIP1/SEC20L, and SEC22B. RINT1/TIP20L and ZW10 are associated with the complex through interaction with BNIP1/SEC20L. Interacts directly with USE1L and BNIP1/SEC20L.

Its subcellular location is the endoplasmic reticulum membrane. The protein resides in the golgi apparatus membrane. Its function is as follows. Syntaxin that may be involved in targeting and fusion of Golgi-derived retrograde transport vesicles with the ER. This is Syntaxin-18 (STX18) from Pongo abelii (Sumatran orangutan).